We begin with the raw amino-acid sequence, 914 residues long: Translation initiation factor IF-2 (914 aa).

2 disordered regions span residues 246–271 (EDGEAAKKKAAKPDGGEDVGVKKKKG) and 293–313 (SGMDDSGLSGSRQKFRKQRRM). Over residues 249 to 266 (EAAKKKAAKPDGGEDVGV) the composition is skewed to basic and acidic residues. In terms of domain architecture, tr-type G spans 411 to 581 (TRPPVVTIMG…LAEAEIRELK (171 aa)). The segment at 420–427 (GHVDHGKT) is G1. 420–427 (GHVDHGKT) serves as a coordination point for GTP. A G2 region spans residues 445–449 (GITQH). The interval 467-470 (DTPG) is G3. GTP contacts are provided by residues 467 to 471 (DTPGH) and 521 to 524 (NKID). Residues 521–524 (NKID) form a G4 region. The interval 557 to 559 (SAK) is G5.

Belongs to the TRAFAC class translation factor GTPase superfamily. Classic translation factor GTPase family. IF-2 subfamily.

Its subcellular location is the cytoplasm. Functionally, one of the essential components for the initiation of protein synthesis. Protects formylmethionyl-tRNA from spontaneous hydrolysis and promotes its binding to the 30S ribosomal subunits. Also involved in the hydrolysis of GTP during the formation of the 70S ribosomal complex. This Chlorobaculum tepidum (strain ATCC 49652 / DSM 12025 / NBRC 103806 / TLS) (Chlorobium tepidum) protein is Translation initiation factor IF-2.